A 353-amino-acid polypeptide reads, in one-letter code: Peroxisome assembly protein 12-A (353 aa).

Topologically, residues 1–19 (MAERGAHITTTSASDDRPS) are peroxisomal matrix. Residues 20–47 (IFEVVAQESLMAAARPALHHIVKVLAES) form a helical membrane-spanning segment. At 48–51 (NPSR) the chain is on the cytoplasmic side. The chain crosses the membrane as a helical span at residues 52–76 (YGTLWRWFDELYTLLDWLLQQHYLS). Residues 77–104 (WASASFSENFYGLKRITLGKEVGQRNLP) are Peroxisomal matrix-facing. Residues 105–134 (RKEYWKSLLLLVLIPYLRVKLEKIVNRLRE) form a helical membrane-spanning segment. Over 135–139 (EQDYS) the chain is Cytoplasmic. Residues 140–178 (IQNPTSFHKRCYKAILASYPFVKLGWEAWFLFYQLRYIL) form a helical membrane-spanning segment. At 179 to 243 (WNGKNHSPLL…LGAVALSVSS (65 aa)) the chain is on the peroxisomal matrix side. Residues 244-271 (SLSLGVFFLQFLDWWYSAENQETLKSLN) form a helical membrane-spanning segment. Over 272–353 (NLPVPPPPIH…HLIKLYTPDG (82 aa)) the chain is Cytoplasmic. Zn(2+) contacts are provided by C298, C301, C319, and C322. The RING-type; degenerate zinc finger occupies 298 to 337 (CPLCRKVRVNDTALGTSGYVFCYRCAYYYVKTHQRCPVSG).

It belongs to the pex2/pex10/pex12 family. In terms of assembly, component of the PEX2-PEX10-PEX12 retrotranslocation channel.

Its subcellular location is the peroxisome membrane. The protein operates within protein modification; protein ubiquitination. Functionally, component of a retrotranslocation channel required for peroxisome organization by mediating export of the PEX5 receptor from peroxisomes to the cytosol, thereby promoting PEX5 recycling. The retrotranslocation channel is composed of PEX2, PEX10 and PEX12; each subunit contributing transmembrane segments that coassemble into an open channel that specifically allows the passage of PEX5 through the peroxisomal membrane. PEX12 also regulates PEX5 recycling by activating the E3 ubiquitin-protein ligase activity of PEX10. When PEX5 recycling is compromised, PEX12 stimulates PEX10-mediated polyubiquitination of PEX5, leading to its subsequent degradation. The sequence is that of Peroxisome assembly protein 12-A from Xenopus laevis (African clawed frog).